The primary structure comprises 554 residues: Thermosome subunit alpha (554 aa).

The disordered stretch occupies residues 530–554 (PKKKEKKGKTGEEEEEEGGGSKFEF).

It belongs to the TCP-1 chaperonin family. As to quaternary structure, forms a Heterooligomeric complex of two stacked eight-membered rings.

Functionally, molecular chaperone; binds unfolded polypeptides in vitro, and has a weak ATPase activity. The polypeptide is Thermosome subunit alpha (thsA) (Aeropyrum pernix (strain ATCC 700893 / DSM 11879 / JCM 9820 / NBRC 100138 / K1)).